We begin with the raw amino-acid sequence, 194 residues long: dTTP/UTP pyrophosphatase (194 aa).

Residue aspartate 68 is the Proton acceptor of the active site.

The protein belongs to the Maf family. YhdE subfamily. A divalent metal cation serves as cofactor.

It localises to the cytoplasm. It catalyses the reaction dTTP + H2O = dTMP + diphosphate + H(+). The catalysed reaction is UTP + H2O = UMP + diphosphate + H(+). Nucleoside triphosphate pyrophosphatase that hydrolyzes dTTP and UTP. May have a dual role in cell division arrest and in preventing the incorporation of modified nucleotides into cellular nucleic acids. In Clostridioides difficile (strain 630) (Peptoclostridium difficile), this protein is dTTP/UTP pyrophosphatase.